The sequence spans 37 residues: Cytochrome b6-f complex subunit 5 (37 aa).

The helical transmembrane segment at 5–25 (LLSGIVLGMIPVTLAGLFVTA) threads the bilayer.

The protein belongs to the PetG family. In terms of assembly, the 4 large subunits of the cytochrome b6-f complex are cytochrome b6, subunit IV (17 kDa polypeptide, PetD), cytochrome f and the Rieske protein, while the 4 small subunits are PetG, PetL, PetM and PetN. The complex functions as a dimer.

The protein resides in the plastid. It is found in the chloroplast thylakoid membrane. Its function is as follows. Component of the cytochrome b6-f complex, which mediates electron transfer between photosystem II (PSII) and photosystem I (PSI), cyclic electron flow around PSI, and state transitions. PetG is required for either the stability or assembly of the cytochrome b6-f complex. This Staurastrum punctulatum (Green alga) protein is Cytochrome b6-f complex subunit 5.